The primary structure comprises 290 residues: MLKTIQDKARHRTRPLWAWLKLLWQRIDEDNMTTLAGNLAYVSLLSLVPLVAVVFALFAAFPMFSDVSIQLRHFIFANFLPATGDVIQRYIEQFVANSNKMTAVGACGLIVTALLLMYSIDSALNTIWRSKRARPKIYSFAVYWMILTLGPLLAGASLAISSYLLSLRWASDLNTVIDNVLRIFPLLLSWISFWLLYSIVPTIRVPNRDAIVGAFVAALLFEAGKKGFALYITMFPSYQLIYGVLAVIPILFVWVYWTWCIVLLGAEITVTLGEYHKLKQAAEQEEDDEP.

6 helical membrane-spanning segments follow: residues 44 to 64 (LLSL…FPMF), 104 to 124 (VGAC…DSAL), 140 to 160 (FAVY…SLAI), 183 to 203 (IFPL…VPTI), 210 to 230 (AIVG…GFAL), and 244 to 264 (VLAV…IVLL).

The protein belongs to the UPF0761 family.

It localises to the cell inner membrane. This chain is UPF0761 membrane protein YihY, found in Shigella boydii serotype 4 (strain Sb227).